The sequence spans 140 residues: Phosphopantetheine adenylyltransferase (140 aa).

Ser-9 provides a ligand contact to substrate. ATP is bound by residues 9 to 10 (SF) and His-17. Positions 41, 74, and 88 each coordinate substrate. ATP contacts are provided by residues 89-91 (GLR), Glu-99, and 124-130 (KRSLSST).

It belongs to the bacterial CoaD family. As to quaternary structure, homohexamer. Mg(2+) is required as a cofactor.

The protein localises to the cytoplasm. It carries out the reaction (R)-4'-phosphopantetheine + ATP + H(+) = 3'-dephospho-CoA + diphosphate. The protein operates within cofactor biosynthesis; coenzyme A biosynthesis; CoA from (R)-pantothenate: step 4/5. Reversibly transfers an adenylyl group from ATP to 4'-phosphopantetheine, yielding dephospho-CoA (dPCoA) and pyrophosphate. The polypeptide is Phosphopantetheine adenylyltransferase (Mycoplasma capricolum subsp. capricolum (strain California kid / ATCC 27343 / NCTC 10154)).